Here is a 576-residue protein sequence, read N- to C-terminus: Malonate--CoA ligase ACSF3, mitochondrial (576 aa).

A mitochondrion-targeting transit peptide spans Met-1 to Cys-83. ATP contacts are provided by residues Thr-202–Lys-210, Asp-457, Arg-471, and Lys-563.

Belongs to the ATP-dependent AMP-binding enzyme family.

The protein localises to the mitochondrion. The catalysed reaction is tetracosanoate + ATP + CoA = tetracosanoyl-CoA + AMP + diphosphate. It carries out the reaction malonate + ATP + CoA = malonyl-CoA + AMP + diphosphate. Functionally, catalyzes the initial reaction in intramitochondrial fatty acid synthesis, by activating malonate and methylmalonate, but not acetate, into their respective CoA thioester. May have some preference toward very-long-chain substrates. This is Malonate--CoA ligase ACSF3, mitochondrial from Homo sapiens (Human).